Consider the following 566-residue polypeptide: Protein pacG (566 aa).

A DNA-binding region (NDT80) is located at residues 79–326 (TSFDPPPPAE…RSPRNFQSRK (248 aa)). Disordered regions lie at residues 314 to 422 (VRGR…EAHR) and 448 to 470 (DSRP…DSGR). A compositionally biased stretch (low complexity) spans 333–349 (SAAASRKNAQAAAASNN). 3 stretches are compositionally biased toward polar residues: residues 365–391 (VKSS…ATNS), 403–413 (HSSVYSQSSPE), and 452–466 (HTSF…SLSV).

It localises to the nucleus. The protein resides in the cytoplasm. Transcription factor that acts as a positive regulator of nonrepressible acid phosphatase activity. Is a major regulator of responses to nitrogen and carbon starvation and is essential for the expression of genes involved in vegetative incompatibility (like pin-c, het-6, and tol). Vegetative incompatibility is a non-self-recognition system ubiquitous in filamentous fungi which results in programmed cell death. The polypeptide is Protein pacG (pacG) (Emericella nidulans (strain FGSC A4 / ATCC 38163 / CBS 112.46 / NRRL 194 / M139) (Aspergillus nidulans)).